Reading from the N-terminus, the 505-residue chain is Cytochrome c oxidase subunit 1 (505 aa).

A helical membrane pass occupies residues 14–34 (LLYLVFAFFGGLLGTSLSMLI). Ca(2+) contacts are provided by Glu37 and Gly42. A run of 6 helical transmembrane segments spans residues 55-75 (VIIT…ALFG), 98-118 (NISF…TLVE), 143-163 (AILS…NMLV), 180-200 (LFVW…PVLA), 229-249 (LFWF…FGIV), and 261-281 (VFGL…GFIV). Residue His60 participates in Fe(II)-heme a binding. 2 residues coordinate Cu cation: His235 and Tyr239. Residues 235-239 (HPEVY) constitute a cross-link (1'-histidyl-3'-tyrosine (His-Tyr)). Residue Tyr239 coordinates O2. 2 residues coordinate Cu cation: His284 and His285. A run of 2 helical transmembrane segments spans residues 302-322 (ATMI…ATIY) and 332-352 (MWFA…GVVL). 2 residues coordinate Mg(2+): His362 and Asp363. His370 is a binding site for heme a3. A Fe(II)-heme a-binding site is contributed by His372. The next 3 helical transmembrane spans lie at 374–394 (VLSM…GNLI), 408–428 (FWLL…LGLA), and 446–466 (AVSS…ATTF).

It belongs to the heme-copper respiratory oxidase family. As to quaternary structure, component of the cytochrome c oxidase (complex IV, CIV), a multisubunit enzyme composed of a catalytic core of 3 subunits and several supernumerary subunits. The complex exists as a monomer or a dimer and forms supercomplexes (SCs) in the inner mitochondrial membrane with ubiquinol-cytochrome c oxidoreductase (cytochrome b-c1 complex, complex III, CIII). The cofactor is heme. It depends on Cu cation as a cofactor.

The protein localises to the mitochondrion inner membrane. It carries out the reaction 4 Fe(II)-[cytochrome c] + O2 + 8 H(+)(in) = 4 Fe(III)-[cytochrome c] + 2 H2O + 4 H(+)(out). The protein operates within energy metabolism; oxidative phosphorylation. In terms of biological role, component of the cytochrome c oxidase, the last enzyme in the mitochondrial electron transport chain which drives oxidative phosphorylation. The respiratory chain contains 3 multisubunit complexes succinate dehydrogenase (complex II, CII), ubiquinol-cytochrome c oxidoreductase (cytochrome b-c1 complex, complex III, CIII) and cytochrome c oxidase (complex IV, CIV), that cooperate to transfer electrons derived from NADH and succinate to molecular oxygen, creating an electrochemical gradient over the inner membrane that drives transmembrane transport and the ATP synthase. Cytochrome c oxidase is the component of the respiratory chain that catalyzes the reduction of oxygen to water. Electrons originating from reduced cytochrome c in the intermembrane space (IMS) are transferred via the dinuclear copper A center (CU(A)) of subunit 2 and heme A of subunit 1 to the active site in subunit 1, a binuclear center (BNC) formed by heme A3 and copper B (CU(B)). The BNC reduces molecular oxygen to 2 water molecules using 4 electrons from cytochrome c in the IMS and 4 protons from the mitochondrial matrix. The protein is Cytochrome c oxidase subunit 1 (COX1) of Chlamydomonas reinhardtii (Chlamydomonas smithii).